We begin with the raw amino-acid sequence, 393 residues long: Ninja-family protein 1 (393 aa).

Disordered regions lie at residues 1–27 (MEGFSRDLLCGIGKGDAPPPEKRPGQL) and 155–200 (NDDW…KEMN). Residues 156–170 (DDWKKRKEAQSLKRL) show a composition bias toward basic and acidic residues.

This sequence belongs to the Ninja family.

The protein localises to the nucleus. The chain is Ninja-family protein 1 from Zea mays (Maize).